Reading from the N-terminus, the 92-residue chain is Co-chaperonin GroES (92 aa).

Belongs to the GroES chaperonin family. Heptamer of 7 subunits arranged in a ring. Interacts with the chaperonin GroEL.

It localises to the cytoplasm. In terms of biological role, together with the chaperonin GroEL, plays an essential role in assisting protein folding. The GroEL-GroES system forms a nano-cage that allows encapsulation of the non-native substrate proteins and provides a physical environment optimized to promote and accelerate protein folding. GroES binds to the apical surface of the GroEL ring, thereby capping the opening of the GroEL channel. This chain is Co-chaperonin GroES, found in Thermotoga maritima (strain ATCC 43589 / DSM 3109 / JCM 10099 / NBRC 100826 / MSB8).